We begin with the raw amino-acid sequence, 586 residues long: MEQSVSAEQIELKSSLPGSKKVYVEGSREGMKVPMREIELSDTNGVPNSPIRVYDTSGPYTDPEYKVELEKGIPTPRRNWIIERGDVEEYEGREIKPEDDGVKAASNHTPVFPQMDRKPLRAKKGANVTQMHYARKGIITSEMEYVAIREGVEPEFVRKEIAEGRAILPANINHPEAEPMIIGRNFHVKVNANIGNSAVSSSIAEEVEKMTWATRWGADTIMDLSTGKNIHTTREWIIRNAPVPVGTVPIYQALEKVQGIAENLTWEVYRDTLIEQAEQGVDYFTIHAGVLLRYIPLTAKRMTGIVSRGGSIMAQWCLYHHKENFLYTHFEEICEIMKQYDVSFSLGDGLRPGSIADANDEAQFAELETLGELTKIAWKHDVQVMIEGPGHVPMHLIKENMEKEIDICQGAPFYTLGPLTTDIAPGYDHITSAIGAAMIGWFGTAMLCYVTPKEHLGLPNKDDVREGVITYKIAAHAADLAKGHKTAQQRDDALSKARFEFRWRDQFNLSLDPERAMEFHDETLPAEGAKTAHFCSMCGPKFCSMKISHDIREYAKENNLETTEAIEKGMKEKAKEFKEAGSHLYQ.

2 disordered regions span residues 38–59 (IELSDTNGVPNSPIRVYDTSGP) and 92–114 (GREIKPEDDGVKAASNHTPVFPQ). The segment covering 92-102 (GREIKPEDDGV) has biased composition (basic and acidic residues). Substrate contacts are provided by residues Asn193, Met222, Tyr251, His287, 307–309 (SRG), 348–351 (DGLR), and Glu387. His391 contacts Zn(2+). A substrate-binding site is contributed by Tyr414. His455 contacts Zn(2+). Residues Cys535, Cys538, and Cys543 each contribute to the [4Fe-4S] cluster site.

It belongs to the ThiC family. [4Fe-4S] cluster is required as a cofactor.

It carries out the reaction 5-amino-1-(5-phospho-beta-D-ribosyl)imidazole + S-adenosyl-L-methionine = 4-amino-2-methyl-5-(phosphooxymethyl)pyrimidine + CO + 5'-deoxyadenosine + formate + L-methionine + 3 H(+). It functions in the pathway cofactor biosynthesis; thiamine diphosphate biosynthesis. Functionally, catalyzes the synthesis of the hydroxymethylpyrimidine phosphate (HMP-P) moiety of thiamine from aminoimidazole ribotide (AIR) in a radical S-adenosyl-L-methionine (SAM)-dependent reaction. The polypeptide is Phosphomethylpyrimidine synthase (Bacillus cytotoxicus (strain DSM 22905 / CIP 110041 / 391-98 / NVH 391-98)).